A 296-amino-acid polypeptide reads, in one-letter code: Ribosomal protein L11 methyltransferase (296 aa).

S-adenosyl-L-methionine contacts are provided by Thr-151, Gly-172, Asp-194, and Asn-233.

It belongs to the methyltransferase superfamily. PrmA family.

It localises to the cytoplasm. The catalysed reaction is L-lysyl-[protein] + 3 S-adenosyl-L-methionine = N(6),N(6),N(6)-trimethyl-L-lysyl-[protein] + 3 S-adenosyl-L-homocysteine + 3 H(+). In terms of biological role, methylates ribosomal protein L11. The chain is Ribosomal protein L11 methyltransferase from Thiobacillus denitrificans (strain ATCC 25259 / T1).